The primary structure comprises 66 residues: MSKLKTRSSAAKRFKVTATGKILHKKAGKRHNLSKKSKARKRRLDIPGEIKSVDRWKVERMLPYNL.

The segment covering 24-43 (HKKAGKRHNLSKKSKARKRR) has biased composition (basic residues). The interval 24–44 (HKKAGKRHNLSKKSKARKRRL) is disordered.

The protein belongs to the bacterial ribosomal protein bL35 family.

The chain is Large ribosomal subunit protein bL35 from Dictyoglomus thermophilum (strain ATCC 35947 / DSM 3960 / H-6-12).